Reading from the N-terminus, the 702-residue chain is Elongation factor G (702 aa).

The region spanning 8-290 (HRVRNIGIAA…AVAMYLPAPT (283 aa)) is the tr-type G domain. Residues 17 to 24 (AHIDAGKT), 87 to 91 (DTPGH), and 141 to 144 (NKMD) each bind GTP.

It belongs to the TRAFAC class translation factor GTPase superfamily. Classic translation factor GTPase family. EF-G/EF-2 subfamily.

The protein localises to the cytoplasm. In terms of biological role, catalyzes the GTP-dependent ribosomal translocation step during translation elongation. During this step, the ribosome changes from the pre-translocational (PRE) to the post-translocational (POST) state as the newly formed A-site-bound peptidyl-tRNA and P-site-bound deacylated tRNA move to the P and E sites, respectively. Catalyzes the coordinated movement of the two tRNA molecules, the mRNA and conformational changes in the ribosome. The protein is Elongation factor G of Aliarcobacter butzleri (strain RM4018) (Arcobacter butzleri).